Consider the following 743-residue polypeptide: Phosphoribosylformylglycinamidine synthase subunit PurL (743 aa).

Histidine 50 is a catalytic residue. ATP is bound by residues tyrosine 53 and lysine 92. Mg(2+) is bound at residue glutamate 94. Substrate-binding positions include 95-98 and arginine 117; that span reads SHNH. Residue histidine 96 is the Proton acceptor of the active site. Aspartate 118 lines the Mg(2+) pocket. Glutamine 241 contributes to the substrate binding site. Mg(2+) is bound at residue aspartate 269. Position 313-315 (313-315) interacts with substrate; the sequence is ESQ. Residues aspartate 494 and glycine 531 each coordinate ATP. Position 532 (asparagine 532) interacts with Mg(2+). Residue serine 534 participates in substrate binding.

Belongs to the FGAMS family. Monomer. Part of the FGAM synthase complex composed of 1 PurL, 1 PurQ and 2 PurS subunits.

It localises to the cytoplasm. The catalysed reaction is N(2)-formyl-N(1)-(5-phospho-beta-D-ribosyl)glycinamide + L-glutamine + ATP + H2O = 2-formamido-N(1)-(5-O-phospho-beta-D-ribosyl)acetamidine + L-glutamate + ADP + phosphate + H(+). The protein operates within purine metabolism; IMP biosynthesis via de novo pathway; 5-amino-1-(5-phospho-D-ribosyl)imidazole from N(2)-formyl-N(1)-(5-phospho-D-ribosyl)glycinamide: step 1/2. In terms of biological role, part of the phosphoribosylformylglycinamidine synthase complex involved in the purines biosynthetic pathway. Catalyzes the ATP-dependent conversion of formylglycinamide ribonucleotide (FGAR) and glutamine to yield formylglycinamidine ribonucleotide (FGAM) and glutamate. The FGAM synthase complex is composed of three subunits. PurQ produces an ammonia molecule by converting glutamine to glutamate. PurL transfers the ammonia molecule to FGAR to form FGAM in an ATP-dependent manner. PurS interacts with PurQ and PurL and is thought to assist in the transfer of the ammonia molecule from PurQ to PurL. This chain is Phosphoribosylformylglycinamidine synthase subunit PurL, found in Rhizobium meliloti (strain 1021) (Ensifer meliloti).